Consider the following 316-residue polypeptide: Glutathione synthetase (316 aa).

The ATP-grasp domain occupies 125–311; that stretch reads KLFTAWFPEL…ITGMLMNAIE (187 aa). 151 to 207 serves as a coordination point for ATP; the sequence is HQKHGDVIFKPLDGMGGASIFRLKKDDPNVGVIIETLTEHGNRFCMAQNFLPAIKEG. Residues Glu281 and Asn283 each coordinate Mg(2+).

Belongs to the prokaryotic GSH synthase family. It depends on Mg(2+) as a cofactor. Mn(2+) is required as a cofactor.

The catalysed reaction is gamma-L-glutamyl-L-cysteine + glycine + ATP = glutathione + ADP + phosphate + H(+). The protein operates within sulfur metabolism; glutathione biosynthesis; glutathione from L-cysteine and L-glutamate: step 2/2. This chain is Glutathione synthetase, found in Photorhabdus laumondii subsp. laumondii (strain DSM 15139 / CIP 105565 / TT01) (Photorhabdus luminescens subsp. laumondii).